A 215-amino-acid polypeptide reads, in one-letter code: Large ribosomal subunit protein uL3 (215 aa).

The interval 124-164 is disordered; the sequence is KRHGFSRGPMTHGSKNHREPGSTGAGTTPGRIYPGKRMAGR.

This sequence belongs to the universal ribosomal protein uL3 family. Part of the 50S ribosomal subunit. Forms a cluster with proteins L14 and L19.

Its function is as follows. One of the primary rRNA binding proteins, it binds directly near the 3'-end of the 23S rRNA, where it nucleates assembly of the 50S subunit. In Synechococcus sp. (strain RCC307), this protein is Large ribosomal subunit protein uL3.